A 157-amino-acid chain; its full sequence is Capsid protein (157 aa).

The protein belongs to the virgaviridae capsid protein family.

It is found in the virion. Its function is as follows. Capsid protein self-assembles to form rod-shaped virions about 18 nm in diameter with a central canal enclosing the viral genomic RNA. This is Capsid protein (CP) from Brassica napus (Rape).